A 422-amino-acid chain; its full sequence is Hexuronate transporter (422 aa).

Transmembrane regions (helical) follow at residues 9-29, 45-65, 82-102, 141-161, 163-183, 219-239, 256-276, 294-314, 321-341, 356-376, and 381-401; these read VILFLFLAGVINYLDRSALSI, MGLIFSSFSIGYAIFNFLGGV, VWSLFSGAVALAFGFVSLLII, TPLGGAISGPIVGMIAVAFSW, VSFVLIMIIGLIWAVLWFKFV, LFTAFAFFAYNYILFFFLTWF, VITVIPWILGFIGLAAGGFVS, VVLVTCLFSSAVLIGFAGLVA, TLVALSVFFLYLTGAIYWAVI, FMHFLANTAGIIGPALTGFIV, and TFSGAFLLAGGLAVFASLAVI.

It belongs to the major facilitator superfamily. Phthalate permease family.

It is found in the cell membrane. It catalyses the reaction aldehydo-D-glucuronate(in) + H(+)(in) = aldehydo-D-glucuronate(out) + H(+)(out). The catalysed reaction is aldehydo-D-galacturonate(out) + H(+)(out) = aldehydo-D-galacturonate(in) + H(+)(in). Its function is as follows. Transport of aldohexuronates such as D-glucuronate and D-galacturonate. The chain is Hexuronate transporter from Bacillus subtilis (strain 168).